Consider the following 270-residue polypeptide: uncharacterized protein (270 aa).

Residues Met1–Gly22 form the signal peptide. The N-palmitoyl cysteine moiety is linked to residue Cys23. A lipid anchor (S-diacylglycerol cysteine) is attached at Cys23.

This sequence belongs to the staphylococcal tandem lipoprotein family.

The protein resides in the cell membrane. This is an uncharacterized protein from Staphylococcus aureus (strain N315).